The following is a 121-amino-acid chain: MSFYESVFIIRQDVSLNDIDKIVDDFTKIIKDNNGTIIKKEYWGLRTLAYKIGNNKKGHYYFLGIDITSNVKEELERKMKLNENIIRFLTIKADSISSEPSPILKNQSTENTPVIDVTINN.

Belongs to the bacterial ribosomal protein bS6 family.

Functionally, binds together with bS18 to 16S ribosomal RNA. The chain is Small ribosomal subunit protein bS6 (rpsF) from Rickettsia prowazekii (strain Madrid E).